A 455-amino-acid chain; its full sequence is Golgi pH regulator (455 aa).

5 helical membrane-spanning segments follow: residues 5 to 25 (IDSSIMVTSQILFFGFGWLFF), 46 to 66 (VTFAFSCTMFELIIFEILGVL), 79 to 99 (LCVILLILVFMVPFYIGYFIV), 114 to 134 (CLLWLTFMYFFWKLGDPFPIL), and 150 to 170 (VGVIGVTLMALLSGFGAVNCP). 2 N-linked (GlcNAc...) asparagine glycosylation sites follow: Asn-180 and Asn-243. 4 helical membrane-spanning segments follow: residues 290–310 (GYFFSIYCVWKIFMATINIVL), 343–363 (ISFILVGIIIVSSIRGLLITL), 378–398 (VIVLLLAQIMGMYFVSSVLLI), and 425–445 (WFDVIFLVSALSSILFLYLAH).

This sequence belongs to the Golgi pH regulator (TC 1.A.38) family. Homotrimer. Interacts with RABL3; the interaction stabilizes GPR89B.

It localises to the golgi apparatus membrane. It carries out the reaction iodide(out) = iodide(in). It catalyses the reaction chloride(in) = chloride(out). The catalysed reaction is bromide(in) = bromide(out). The enzyme catalyses fluoride(in) = fluoride(out). In terms of biological role, voltage-gated channel that enables the transfer of anions such as iodide, chloride, bromide and fluoride which may function in counter-ion conductance and participates in Golgi acidification. Plays a role in lymphocyte development, probably by acting as a RABL3 effector in hematopoietic cells. The polypeptide is Golgi pH regulator (Cricetulus griseus (Chinese hamster)).